The chain runs to 93 residues: Small ribosomal subunit protein bS18 (93 aa).

The protein belongs to the bacterial ribosomal protein bS18 family. Part of the 30S ribosomal subunit. Forms a tight heterodimer with protein bS6.

Functionally, binds as a heterodimer with protein bS6 to the central domain of the 16S rRNA, where it helps stabilize the platform of the 30S subunit. The sequence is that of Small ribosomal subunit protein bS18 from Paracidovorax citrulli (strain AAC00-1) (Acidovorax citrulli).